The following is a 615-amino-acid chain: Neurosecretory protein VGF (615 aa).

A signal peptide spans 1–22; that stretch reads MKALRLSASALFCLLLINGLGA. 2 disordered regions span residues 22–201 and 218–257; these read AAPP…ESPG and PERA…PKTH. Composition is skewed to pro residues over residues 25-35 and 129-141; these read PGRPEAQPPPL and PESP…PRPQ. Positions 179–194 are enriched in low complexity; the sequence is ETAAAETETRTHTLTR. Q310 carries the post-translational modification Pyrrolidone carboxylic acid. Positions 342–600 are disordered; it reads RQRGLGGRGL…EAEERRLQEQ (259 aa). Positions 378–394 are enriched in acidic residues; it reads VGEEDEEAAEAEAEAEE. A compositionally biased stretch (basic and acidic residues) spans 415–433; the sequence is AEDKRSQEETPGHRRKEAE. Position 420 is a phosphoserine; by FAM20C (S420). Residue T424 is modified to Phosphothreonine; by FAM20C. A compositionally biased stretch (acidic residues) spans 434-448; the sequence is GTEEGGEEEDDEEMD. Pro residues predominate over residues 487–497; sequence PPEPVPPPRAA. P577 is modified (proline amide). A compositionally biased stretch (basic and acidic residues) spans 577–599; the sequence is PGREAQARRAQEEAEAEERRLQE.

As to quaternary structure, interacts with HSPA8 on cell membrane. Interacts with C3AR1. Interacts with C1QBP. Multiple peptides are derived from VGF, with activities in synaptic plasticity, antidepression, penile erection, autonomic activation, and increases in energy expenditure. As to expression, central and peripheral nervous systems, synthesized exclusively in neuronal and neuroendocrine cells.

It localises to the secreted. The protein resides in the cytoplasmic vesicle. The protein localises to the secretory vesicle. Its function is as follows. Secreted polyprotein that is packaged and proteolytically processed by prohormone convertases PCSK1 and PCSK2 in a cell-type-specific manner. VGF and peptides derived from its processing play many roles in neurogenesis and neuroplasticity associated with learning, memory, depression and chronic pain. Functionally, plays a role in the control of body fluid homeostasis by regulating vasopressin release. Suppresses presynaptic glutamatergic neurons connected to vasopressin neurons. In terms of biological role, plays a role in the control of body fluid homeostasis by regulating vasopressin release. Activates GABAergic interneurons which are inhibitory neurons of the nervous system and thereby suppresses presynaptic glutamatergic neurons. Also stimulates feeding behavior in an orexin-dependent manner in the hypothalamus. Functions as a positive regulator for the activation of orexin neurons resulting in elevated gastric acid secretion and gastric emptying. Secreted multifunctional neuropeptide that binds to different cell receptors and thereby plays multiple physiological roles including modulation of energy expenditure, pain, response to stress, gastric regulation, glucose homeostasis as well as lipolysis. Activates the G-protein-coupled receptor C3AR1 via a folding-upon-binding mechanism leading to enhanced lipolysis in adipocytes. Interacts with C1QBP receptor in macrophages and microglia causing increased levels of intracellular calcium and hypersensitivity. Its function is as follows. Plays a role in the regulation of memory formation and depression-related behaviors potentially by influencing synaptic plasticity and neurogenesis. Induces acute and transient activation of the NTRK2/TRKB receptor and subsequent CREB phosphorylation. Also induces insulin secretion in insulinoma cells by increasing intracellular calcium mobilization. Functionally, has bactericidal activity against M.luteus, and antifungal activity against P. Pastoris. The chain is Neurosecretory protein VGF (VGF) from Homo sapiens (Human).